A 56-amino-acid chain; its full sequence is MAVQKNRKTRSKRGMRRSHDALTTAALSVDATSGETHLRHNVTAEGYYRGQKVINK.

Residues Met1 to Arg16 show a composition bias toward basic residues. The segment at Met1–Ser28 is disordered.

The protein belongs to the bacterial ribosomal protein bL32 family.

This Vibrio campbellii (strain ATCC BAA-1116) protein is Large ribosomal subunit protein bL32.